The sequence spans 556 residues: 2-succinyl-5-enolpyruvyl-6-hydroxy-3-cyclohexene-1-carboxylate synthase (556 aa).

The protein belongs to the TPP enzyme family. MenD subfamily. Homodimer. Requires Mg(2+) as cofactor. It depends on Mn(2+) as a cofactor. The cofactor is thiamine diphosphate.

The catalysed reaction is isochorismate + 2-oxoglutarate + H(+) = 5-enolpyruvoyl-6-hydroxy-2-succinyl-cyclohex-3-ene-1-carboxylate + CO2. The protein operates within quinol/quinone metabolism; 1,4-dihydroxy-2-naphthoate biosynthesis; 1,4-dihydroxy-2-naphthoate from chorismate: step 2/7. It functions in the pathway quinol/quinone metabolism; menaquinone biosynthesis. Its function is as follows. Catalyzes the thiamine diphosphate-dependent decarboxylation of 2-oxoglutarate and the subsequent addition of the resulting succinic semialdehyde-thiamine pyrophosphate anion to isochorismate to yield 2-succinyl-5-enolpyruvyl-6-hydroxy-3-cyclohexene-1-carboxylate (SEPHCHC). The polypeptide is 2-succinyl-5-enolpyruvyl-6-hydroxy-3-cyclohexene-1-carboxylate synthase (Salmonella agona (strain SL483)).